The sequence spans 171 residues: Glycine cleavage system H protein 4 (171 aa).

Residues 30–112 (FAEVGITDYA…YEAGWIAVIE (83 aa)) enclose the Lipoyl-binding domain. An N6-lipoyllysine modification is found at Lys71. Positions 139-171 (EKEEEVEVKEEELIETESIEELSEEELGYEENK) are disordered.

Belongs to the GcvH family. The glycine cleavage system is composed of four proteins: P, T, L and H. It depends on (R)-lipoate as a cofactor.

Its function is as follows. The glycine cleavage system catalyzes the degradation of glycine. The H protein shuttles the methylamine group of glycine from the P protein to the T protein. The sequence is that of Glycine cleavage system H protein 4 from Aquifex aeolicus (strain VF5).